Here is a 337-residue protein sequence, read N- to C-terminus: Putative 2-aminoethylphosphonate-binding periplasmic protein (337 aa).

The first 21 residues, 1–21 (MKLSRLALLSVFALASAPSWA), serve as a signal peptide directing secretion.

It belongs to the bacterial solute-binding protein 1 family.

Its subcellular location is the periplasm. In terms of biological role, probably part of the PhnSTUV complex (TC 3.A.1.11.5) involved in 2-aminoethylphosphonate import. The sequence is that of Putative 2-aminoethylphosphonate-binding periplasmic protein (phnS) from Salmonella typhimurium (strain LT2 / SGSC1412 / ATCC 700720).